Consider the following 603-residue polypeptide: MTTAPIDNIRNFSIVAHIDHGKSTLADRLIQITGGMSDREMAGKEQVLDSMDIERERGITIKAQTVRLKYRAHDGKDYIFNLMDTPGHVDFAYEVSRSLAACEGSLLVVDASQGVEAQTLANVYHALDAGHEIVPVLNKVDLPAAEPEKIKQQIEDVIGLDASDAVMISAKTGLGVPDVLEAIVTRLPPPKGDRDATLKALLVDSWYDVYLGVVVLVRVVDGVLKKGQRIRMMGTGAAYDVERVGYFTPKMVNVEELGPGEVGFITAAIKEVADTRVGDTITDDKKPVTDMLPGFKPAIPVVFCGLFPVDADDFETLRAAMGKLRLNDASFSFEMETSAALGFGFRCGFLGLLHLEIIQERLSREFDLDLIATAPSVIYKMKLTDGTEMEIHNPVDMPDVVKIAEIEEPWIEATILTPDEYLGSVLKLCQDRRGNQKELTYVGARAMVKYDLPLNEVVFDFYDRLKSVSKGYASFDYHLTDYKPADLVKMQILVNAEPVDALSMLVHRTRAEGRGRAMVEKMKELIPPHMFQIPIQAAIGGKVIARETVRALRKDVTAKCYGGDITRKRKLLEKQKEGKKKMRQFGKVDIPQEAFIAALKVDS.

A tr-type G domain is found at 7–191 (DNIRNFSIVA…AIVTRLPPPK (185 aa)). GTP contacts are provided by residues 19-24 (DHGKST) and 138-141 (NKVD).

The protein belongs to the TRAFAC class translation factor GTPase superfamily. Classic translation factor GTPase family. LepA subfamily.

It localises to the cell inner membrane. The catalysed reaction is GTP + H2O = GDP + phosphate + H(+). Its function is as follows. Required for accurate and efficient protein synthesis under certain stress conditions. May act as a fidelity factor of the translation reaction, by catalyzing a one-codon backward translocation of tRNAs on improperly translocated ribosomes. Back-translocation proceeds from a post-translocation (POST) complex to a pre-translocation (PRE) complex, thus giving elongation factor G a second chance to translocate the tRNAs correctly. Binds to ribosomes in a GTP-dependent manner. In Rhodopseudomonas palustris (strain ATCC BAA-98 / CGA009), this protein is Elongation factor 4.